The chain runs to 81 residues: Exodeoxyribonuclease 7 small subunit (81 aa).

The interval M61–D81 is disordered.

The protein belongs to the XseB family. As to quaternary structure, heterooligomer composed of large and small subunits.

It is found in the cytoplasm. The enzyme catalyses Exonucleolytic cleavage in either 5'- to 3'- or 3'- to 5'-direction to yield nucleoside 5'-phosphates.. Bidirectionally degrades single-stranded DNA into large acid-insoluble oligonucleotides, which are then degraded further into small acid-soluble oligonucleotides. The protein is Exodeoxyribonuclease 7 small subunit of Levilactobacillus brevis (strain ATCC 367 / BCRC 12310 / CIP 105137 / JCM 1170 / LMG 11437 / NCIMB 947 / NCTC 947) (Lactobacillus brevis).